The chain runs to 120 residues: NAD(P)H-quinone oxidoreductase subunit 3, chloroplastic (120 aa).

A run of 3 helical transmembrane segments spans residues 14–34 (LIIS…LAPI), 64–84 (MFAL…PWAM), and 88–108 (VLGV…IVGS).

This sequence belongs to the complex I subunit 3 family. NDH is composed of at least 16 different subunits, 5 of which are encoded in the nucleus.

It is found in the plastid. It localises to the chloroplast thylakoid membrane. The catalysed reaction is a plastoquinone + NADH + (n+1) H(+)(in) = a plastoquinol + NAD(+) + n H(+)(out). It carries out the reaction a plastoquinone + NADPH + (n+1) H(+)(in) = a plastoquinol + NADP(+) + n H(+)(out). Its function is as follows. NDH shuttles electrons from NAD(P)H:plastoquinone, via FMN and iron-sulfur (Fe-S) centers, to quinones in the photosynthetic chain and possibly in a chloroplast respiratory chain. The immediate electron acceptor for the enzyme in this species is believed to be plastoquinone. Couples the redox reaction to proton translocation, and thus conserves the redox energy in a proton gradient. This Cicer arietinum (Chickpea) protein is NAD(P)H-quinone oxidoreductase subunit 3, chloroplastic.